Here is a 284-residue protein sequence, read N- to C-terminus: Bifunctional protein FolD (284 aa).

NADP(+) contacts are provided by residues G165–S167 and S190.

The protein belongs to the tetrahydrofolate dehydrogenase/cyclohydrolase family. Homodimer.

It catalyses the reaction (6R)-5,10-methylene-5,6,7,8-tetrahydrofolate + NADP(+) = (6R)-5,10-methenyltetrahydrofolate + NADPH. The enzyme catalyses (6R)-5,10-methenyltetrahydrofolate + H2O = (6R)-10-formyltetrahydrofolate + H(+). The protein operates within one-carbon metabolism; tetrahydrofolate interconversion. Its function is as follows. Catalyzes the oxidation of 5,10-methylenetetrahydrofolate to 5,10-methenyltetrahydrofolate and then the hydrolysis of 5,10-methenyltetrahydrofolate to 10-formyltetrahydrofolate. The chain is Bifunctional protein FolD from Streptococcus gordonii (strain Challis / ATCC 35105 / BCRC 15272 / CH1 / DL1 / V288).